The chain runs to 266 residues: Mediator of RNA polymerase II transcription subunit 18 (266 aa).

Belongs to the Mediator complex subunit 18 family. Component of the Mediator complex.

The protein resides in the nucleus. Functionally, component of the Mediator complex, a coactivator involved in the regulated transcription of nearly all RNA polymerase II-dependent genes. Mediator functions as a bridge to convey information from gene-specific regulatory proteins to the basal RNA polymerase II transcription machinery. Mediator is recruited to promoters by direct interactions with regulatory proteins and serves as a scaffold for the assembly of a functional preinitiation complex with RNA polymerase II and the general transcription factors. The sequence is that of Mediator of RNA polymerase II transcription subunit 18 (SRB5) from Candida glabrata (strain ATCC 2001 / BCRC 20586 / JCM 3761 / NBRC 0622 / NRRL Y-65 / CBS 138) (Yeast).